We begin with the raw amino-acid sequence, 794 residues long: Ent-copalyl diphosphate synthase 2 (794 aa).

The transit peptide at 1–35 directs the protein to the chloroplast; the sequence is MSSSSNVTSLPRLTTAGGVFPREMVRVHSSCNILR. Lys-238 lines the substrate pocket. 2 residues coordinate Mg(2+): Asp-369 and Asp-371. The short motif at 369–372 is the DXDD motif element; the sequence is DVDD. Residue Lys-455 participates in substrate binding.

Belongs to the terpene synthase family. Tpsc subfamily. Mg(2+) is required as a cofactor. In terms of tissue distribution, expressed in leaves.

It localises to the plastid. Its subcellular location is the chloroplast. It catalyses the reaction (2E,6E,10E)-geranylgeranyl diphosphate = ent-copalyl diphosphate. It functions in the pathway secondary metabolite biosynthesis; terpenoid biosynthesis. Its function is as follows. Involved in the biosynthesis of ent-kaurene diterpenoids natural products such as oridonin, miltiradiene, eriocalyxin B and nezukol, known to exhibit antitumor, anti-inflammatory and antibacterial activities. Catalyzes the conversion of (2E,6E,10E)-geranylgeranyl diphosphate (GGPP) to ent-copalyl diphosphate (ent-CPP). The protein is Ent-copalyl diphosphate synthase 2 of Isodon eriocalyx (Plectranthus eriocalyx).